The chain runs to 239 residues: Pathogenesis-related protein 5 (239 aa).

The signal sequence occupies residues 1-23; it reads MANISSIHILFLVFITSGIAVMA. Intrachain disulfides connect cysteine 32–cysteine 238, cysteine 79–cysteine 89, cysteine 94–cysteine 99, cysteine 146–cysteine 228, cysteine 151–cysteine 211, cysteine 159–cysteine 174, cysteine 178–cysteine 187, and cysteine 188–cysteine 198.

The protein belongs to the thaumatin family.

Its subcellular location is the secreted. The protein localises to the extracellular space. The protein resides in the apoplast. In terms of biological role, partially responsible for acquired pathogen resistance. This Arabidopsis thaliana (Mouse-ear cress) protein is Pathogenesis-related protein 5.